The chain runs to 474 residues: PRAME family member 13 (474 aa).

One copy of the LRR 1; degenerate repeat lies at 97–124 (RRKLQVLDLRDVDENFWARWPGAWALSC). An LRR 2; degenerate repeat occupies 179-203 (HLCCSKLVNYLTPIKHLRKSLKIIY). An LRR 3; degenerate repeat occupies 204–230 (LNSIQELEIHNMSWPRLIRKLRCYLKE). Residues 231–265 (MKTLGKLVFSRCHHSTSDNELEGRLVTKFSSVFLG) form an LRR 4; degenerate repeat. LRR repeat units follow at residues 266-291 (LEHL…IRCL), 292-323 (QNPL…GYLK), 324-342 (HLNL…PLGA), 348-375 (AASL…GLSR), and 376-400 (CSQL…LLRH).

The protein belongs to the PRAME family.

In Homo sapiens (Human), this protein is PRAME family member 13.